Here is a 219-residue protein sequence, read N- to C-terminus: Ribose-5-phosphate isomerase A (219 aa).

Substrate-binding positions include 28–31, 81–84, and 94–97; these read SGST, DGAD, and KGGG. Glu103 acts as the Proton acceptor in catalysis. Position 121 (Lys121) interacts with substrate.

This sequence belongs to the ribose 5-phosphate isomerase family. In terms of assembly, homodimer.

It catalyses the reaction aldehydo-D-ribose 5-phosphate = D-ribulose 5-phosphate. It functions in the pathway carbohydrate degradation; pentose phosphate pathway; D-ribose 5-phosphate from D-ribulose 5-phosphate (non-oxidative stage): step 1/1. Catalyzes the reversible conversion of ribose-5-phosphate to ribulose 5-phosphate. In Haemophilus ducreyi (strain 35000HP / ATCC 700724), this protein is Ribose-5-phosphate isomerase A.